A 406-amino-acid polypeptide reads, in one-letter code: Tyrosine--tRNA ligase (406 aa).

Position 35 (tyrosine 35) interacts with L-tyrosine. Positions 40–49 match the 'HIGH' region motif; that stretch reads ATSASLHIGH. L-tyrosine-binding residues include tyrosine 167 and glutamine 171. A 'KMSKS' region motif is present at residues 227 to 231; it reads KMGKS. Lysine 230 contributes to the ATP binding site. The S4 RNA-binding domain maps to 341–405; that stretch reads ILLVDLMVLA…IGKKKILRIV (65 aa).

It belongs to the class-I aminoacyl-tRNA synthetase family. TyrS type 1 subfamily. In terms of assembly, homodimer.

It is found in the cytoplasm. It catalyses the reaction tRNA(Tyr) + L-tyrosine + ATP = L-tyrosyl-tRNA(Tyr) + AMP + diphosphate + H(+). Functionally, catalyzes the attachment of tyrosine to tRNA(Tyr) in a two-step reaction: tyrosine is first activated by ATP to form Tyr-AMP and then transferred to the acceptor end of tRNA(Tyr). The protein is Tyrosine--tRNA ligase of Borrelia recurrentis (strain A1).